Reading from the N-terminus, the 416-residue chain is Pectin acetylesterase 3 (416 aa).

The N-terminal stretch at 1 to 25 (MKSVLRIAAAIFWLWLFIVLGVIGS) is a signal peptide. Asn131 is a glycosylation site (N-linked (GlcNAc...) asparagine). Active-site charge relay system residues include Ser198 and Asp294. Asn324 is a glycosylation site (N-linked (GlcNAc...) asparagine). His361 serves as the catalytic Charge relay system.

This sequence belongs to the pectinacetylesterase family.

It is found in the secreted. It localises to the cell wall. Its function is as follows. Hydrolyzes acetyl esters in homogalacturonan regions of pectin. In type I primary cell wall, galacturonic acid residues of pectin can be acetylated at the O-2 and O-3 positions. Decreasing the degree of acetylation of pectin gels in vitro alters their physical properties. This is Pectin acetylesterase 3 from Arabidopsis thaliana (Mouse-ear cress).